Reading from the N-terminus, the 108-residue chain is Large ribosomal subunit protein eL36x (108 aa).

2 disordered regions span residues 13–34 (GHVV…KTSK) and 75–108 (KLGT…EKKK). A compositionally biased stretch (basic residues) spans 75-84 (KLGTHKRAKR).

This sequence belongs to the eukaryotic ribosomal protein eL36 family.

The polypeptide is Large ribosomal subunit protein eL36x (RPL36C) (Arabidopsis thaliana (Mouse-ear cress)).